Consider the following 366-residue polypeptide: Chorismate synthase (366 aa).

Arg48 and Arg54 together coordinate NADP(+). Residues 125 to 127, 238 to 239, Gly278, 293 to 297, and Arg319 contribute to the FMN site; these read RSS, NA, and KPTSS.

This sequence belongs to the chorismate synthase family. As to quaternary structure, homotetramer. FMNH2 is required as a cofactor.

It carries out the reaction 5-O-(1-carboxyvinyl)-3-phosphoshikimate = chorismate + phosphate. The protein operates within metabolic intermediate biosynthesis; chorismate biosynthesis; chorismate from D-erythrose 4-phosphate and phosphoenolpyruvate: step 7/7. Catalyzes the anti-1,4-elimination of the C-3 phosphate and the C-6 proR hydrogen from 5-enolpyruvylshikimate-3-phosphate (EPSP) to yield chorismate, which is the branch point compound that serves as the starting substrate for the three terminal pathways of aromatic amino acid biosynthesis. This reaction introduces a second double bond into the aromatic ring system. The protein is Chorismate synthase of Burkholderia vietnamiensis (strain G4 / LMG 22486) (Burkholderia cepacia (strain R1808)).